The sequence spans 387 residues: Zn(2)-C6 fungal-type trascription factor aoiH (387 aa).

Residues 21 to 48 (CDFCALSKVKCDRGQPQCVRCIKSGIDC) constitute a DNA-binding region (zn(2)-C6 fungal-type). Residues 68–87 (VRSTSATTQGTRRKQQTIAQ) are compositionally biased toward polar residues. Positions 68-94 (VRSTSATTQGTRRKQQTIAQHSPRRRI) are disordered.

Its subcellular location is the nucleus. In terms of biological role, transcription factor; part of the gene cluster that mediates the biosynthesis of a methylated derivative of known natural products orthosporin and diaporthin. Positively regultaes the expression of the non-reducing polyketide synthase aoiG and the O-methyltransferase aoiO. The sequence is that of Zn(2)-C6 fungal-type trascription factor aoiH from Aspergillus oryzae (strain ATCC 42149 / RIB 40) (Yellow koji mold).